Here is a 703-residue protein sequence, read N- to C-terminus: Polyribonucleotide nucleotidyltransferase (703 aa).

Mg(2+) is bound by residues D484 and D490. The KH domain maps to P551–V610. The S1 motif domain occupies G620–K694.

The protein belongs to the polyribonucleotide nucleotidyltransferase family. The cofactor is Mg(2+).

Its subcellular location is the cytoplasm. It catalyses the reaction RNA(n+1) + phosphate = RNA(n) + a ribonucleoside 5'-diphosphate. Involved in mRNA degradation. Catalyzes the phosphorolysis of single-stranded polyribonucleotides processively in the 3'- to 5'-direction. In Syntrophomonas wolfei subsp. wolfei (strain DSM 2245B / Goettingen), this protein is Polyribonucleotide nucleotidyltransferase.